Here is a 159-residue protein sequence, read N- to C-terminus: 3-hydroxyacyl-[acyl-carrier-protein] dehydratase FabZ (159 aa).

His-58 is an active-site residue.

The protein belongs to the thioester dehydratase family. FabZ subfamily.

The protein resides in the cytoplasm. It carries out the reaction a (3R)-hydroxyacyl-[ACP] = a (2E)-enoyl-[ACP] + H2O. In terms of biological role, involved in unsaturated fatty acids biosynthesis. Catalyzes the dehydration of short chain beta-hydroxyacyl-ACPs and long chain saturated and unsaturated beta-hydroxyacyl-ACPs. This is 3-hydroxyacyl-[acyl-carrier-protein] dehydratase FabZ from Helicobacter pylori (strain P12).